The chain runs to 200 residues: Serine/arginine-rich splicing factor RSZ23 (200 aa).

One can recognise an RRM domain in the interval 2–71 (ARVYVGNLDP…NGWRVELSTK (70 aa)). Residues 86-103 (MKCYECGEPGHFARECRL) form a CCHC-type zinc finger. Residues 105-200 (IGSGGLGSGR…REESPYANNA (96 aa)) are disordered. Positions 113–139 (GRRRSRSRSRSPRYRGRSRSRSPRYRR) are enriched in basic residues.

It belongs to the splicing factor SR family. In terms of processing, extensively phosphorylated on serine residues in the RS domain. As to expression, expressed in roots, leaves and immature seeds.

The protein localises to the nucleus. In terms of biological role, involved in pre-mRNA splicing. In protoplast assay, enhances splicing efficiency of WAXY intron 1 and alters the selection of the 5'-splice sites by stimulating site 1 (proximal site). The chain is Serine/arginine-rich splicing factor RSZ23 (RSZ23) from Oryza sativa subsp. japonica (Rice).